A 464-amino-acid chain; its full sequence is Serine protease PepD (464 aa).

Positions 1 to 71 (MAKLARVVGL…TQYRQPYEAL (71 aa)) are disordered. Topologically, residues 1-100 (MAKLARVVGL…GMVRQRPRAG (100 aa)) are cytoplasmic. Positions 39–48 (QGQQQTYSQQ) are enriched in low complexity. Residues 101-121 (MLAIGAVTIAVVSAGIGGAAA) traverse the membrane as a helical segment. Topologically, residues 122–464 (SLVGFNRAPA…VQVTLGKAEQ (343 aa)) are periplasmic. Residues His-197, Asp-236, and Ser-317 each act as charge relay system in the active site. Residues 368-449 (LISTGKASHA…TVALTFQDPS (82 aa)) enclose the PDZ domain.

Belongs to the peptidase S1C family. As to quaternary structure, homotrimer. Interacts with numerous proteins, including the 35 kDa antigen PspA.

It is found in the cell inner membrane. The protein resides in the secreted. It localises to the cell wall. The catalysed reaction is Acts on substrates that are at least partially unfolded. The cleavage site P1 residue is normally between a pair of hydrophobic residues, such as Val-|-Val.. With respect to regulation, probably regulates its own activity by autocleavage, which removes the PDZ domain. Inhibited by the serine protease inhibitor diisopropylfluorophosphate (DFP). Inhibited by fluoroquinolone such as ciprofloxacin, moxifloxacin and ofloxacin and their analogs. Functionally, required for virulence. Acts both as a protease, which degrades and/or refolds damaged substrate targets, and as a chaperone. Plays an important role in the stress response network mediated through the two-component regulatory system MprAB and SigE signaling networks. May utilize its PDZ domain to recognize and process misfolded proteins at the cell membrane, leading to activation of the MprAB and SigE signaling pathways and subsequent establishment of a positive feedback loop that facilitates bacterial adaptation. Interacts with and potentially cleaves several proteins, including the 35 kDa antigen PspA. Proteolytic cleavage of PspA may help to maintain cell envelope homeostasis in Mycobacterium and regulate specific stress response pathways during periods of extracytoplasmic stress. In vitro, exhibits proteolytic activity against the artificial substrate beta-casein. The polypeptide is Serine protease PepD (Mycobacterium tuberculosis (strain ATCC 25618 / H37Rv)).